A 247-amino-acid chain; its full sequence is Granzyme B(G,H) (247 aa).

The signal sequence occupies residues 1–18; that stretch reads MKILLLLLTLSLASRTKA. A propeptide spans 19–20 (activation peptide); sequence GE. The Peptidase S1 domain maps to 21 to 245; the sequence is IIGGHEVKPH…FLSWIKKTMK (225 aa). The cysteines at positions 49 and 65 are disulfide-linked. His64 functions as the Charge relay system in the catalytic mechanism. The N-linked (GlcNAc...) asparagine glycan is linked to Asn71. Asp108 (charge relay system) is an active-site residue. Disulfide bonds link Cys142–Cys209 and Cys173–Cys188. Asn182 carries N-linked (GlcNAc...) asparagine glycosylation. Residue Ser203 is the Charge relay system of the active site.

It belongs to the peptidase S1 family. Granzyme subfamily.

It is found in the secreted. It localises to the cytolytic granule. It carries out the reaction Preferential cleavage: -Asp-|-Xaa- &gt;&gt; -Asn-|-Xaa- &gt; -Met-|-Xaa-, -Ser-|-Xaa-.. Its activity is regulated as follows. Inactivated by the serine protease inhibitor diisopropylfluorophosphate. Functionally, abundant protease in the cytosolic granules of cytotoxic T-cells and NK-cells which activates caspase-independent pyroptosis when delivered into the target cell through the immunological synapse. It cleaves after Asp. Once delivered into the target cell, acts by catalyzing cleavage of gasdermin-E (GSDME), releasing the pore-forming moiety of GSDME, thereby triggering pyroptosis and target cell death. Seems to be linked to an activation cascade of caspases (aspartate-specific cysteine proteases) responsible for apoptosis execution. Cleaves caspase-3 and -9 (CASP3 and CASP9, respectively) to give rise to active enzymes mediating apoptosis. Cleaves and activates CASP7 in response to bacterial infection, promoting plasma membrane repair. The polypeptide is Granzyme B(G,H) (Gzmb) (Mus musculus (Mouse)).